Reading from the N-terminus, the 137-residue chain is NADPH-dependent 7-cyano-7-deazaguanine reductase (137 aa).

The Thioimide intermediate role is filled by Cys51. Asp58 (proton donor) is an active-site residue. Residues 73-75 and 92-93 contribute to the substrate site; these read VEL and HE.

It belongs to the GTP cyclohydrolase I family. QueF type 1 subfamily.

It is found in the cytoplasm. The catalysed reaction is 7-aminomethyl-7-carbaguanine + 2 NADP(+) = 7-cyano-7-deazaguanine + 2 NADPH + 3 H(+). It participates in tRNA modification; tRNA-queuosine biosynthesis. Its function is as follows. Catalyzes the NADPH-dependent reduction of 7-cyano-7-deazaguanine (preQ0) to 7-aminomethyl-7-deazaguanine (preQ1). The chain is NADPH-dependent 7-cyano-7-deazaguanine reductase from Gloeobacter violaceus (strain ATCC 29082 / PCC 7421).